Reading from the N-terminus, the 82-residue chain is Translation initiation factor IF-1, chloroplastic (82 aa).

Residues 1-72 (MNKQNLIDVE…TKGRIIYRLR (72 aa)) form the S1-like domain.

This sequence belongs to the IF-1 family. In terms of assembly, component of the 30S ribosomal translation pre-initiation complex which assembles on the 30S ribosome in the order IF-2 and IF-3, IF-1 and N-formylmethionyl-tRNA(fMet); mRNA recruitment can occur at any time during PIC assembly.

The protein localises to the plastid. It is found in the chloroplast. In terms of biological role, one of the essential components for the initiation of protein synthesis. Stabilizes the binding of IF-2 and IF-3 on the 30S subunit to which N-formylmethionyl-tRNA(fMet) subsequently binds. Helps modulate mRNA selection, yielding the 30S pre-initiation complex (PIC). Upon addition of the 50S ribosomal subunit IF-1, IF-2 and IF-3 are released leaving the mature 70S translation initiation complex. This chain is Translation initiation factor IF-1, chloroplastic, found in Cycas taitungensis (Prince sago).